The primary structure comprises 321 residues: CRISPR-associated endonuclease Cas1 2 (321 aa).

Mn(2+) is bound by residues E150, H213, and E228.

This sequence belongs to the CRISPR-associated endonuclease Cas1 family. In terms of assembly, homodimer, forms a heterotetramer with a Cas2 homodimer. It depends on Mg(2+) as a cofactor. Requires Mn(2+) as cofactor.

CRISPR (clustered regularly interspaced short palindromic repeat), is an adaptive immune system that provides protection against mobile genetic elements (viruses, transposable elements and conjugative plasmids). CRISPR clusters contain spacers, sequences complementary to antecedent mobile elements, and target invading nucleic acids. CRISPR clusters are transcribed and processed into CRISPR RNA (crRNA). Acts as a dsDNA endonuclease. Involved in the integration of spacer DNA into the CRISPR cassette. This Moorella thermoacetica (strain ATCC 39073 / JCM 9320) protein is CRISPR-associated endonuclease Cas1 2.